The sequence spans 129 residues: Small ribosomal subunit protein uS11 (129 aa).

It belongs to the universal ribosomal protein uS11 family. Part of the 30S ribosomal subunit. Interacts with proteins S7 and S18. Binds to IF-3.

Functionally, located on the platform of the 30S subunit, it bridges several disparate RNA helices of the 16S rRNA. Forms part of the Shine-Dalgarno cleft in the 70S ribosome. The sequence is that of Small ribosomal subunit protein uS11 from Phocaeicola vulgatus (strain ATCC 8482 / DSM 1447 / JCM 5826 / CCUG 4940 / NBRC 14291 / NCTC 11154) (Bacteroides vulgatus).